The chain runs to 206 residues: Ras-related protein O-RAL (206 aa).

Residue 21–28 (GSGGVGKS) participates in GTP binding. The Effector region signature appears at 43–51 (YEPTKADSY). GTP contacts are provided by residues 68–72 (DTAGQ) and 128–131 (NKSD). A compositionally biased stretch (basic and acidic residues) spans 180–189 (KMSENKDKNG). A disordered region spans residues 180–206 (KMSENKDKNGKKSSRNKKSLRERCCIL). Cys-203 is modified (cysteine methyl ester). Cys-203 carries S-geranylgeranyl cysteine lipidation. A propeptide spans 204-206 (CIL) (removed in mature form).

It belongs to the small GTPase superfamily. Ras family.

The protein localises to the cell membrane. It catalyses the reaction GTP + H2O = GDP + phosphate + H(+). This is Ras-related protein O-RAL from Diplobatis ommata (Ocellated electric ray).